The sequence spans 214 residues: Probable transaldolase (214 aa).

The active-site Schiff-base intermediate with substrate is the Lys-83.

The protein belongs to the transaldolase family. Type 3B subfamily.

The protein resides in the cytoplasm. The catalysed reaction is D-sedoheptulose 7-phosphate + D-glyceraldehyde 3-phosphate = D-erythrose 4-phosphate + beta-D-fructose 6-phosphate. The protein operates within carbohydrate degradation; pentose phosphate pathway; D-glyceraldehyde 3-phosphate and beta-D-fructose 6-phosphate from D-ribose 5-phosphate and D-xylulose 5-phosphate (non-oxidative stage): step 2/3. Transaldolase is important for the balance of metabolites in the pentose-phosphate pathway. This Brevibacillus brevis (strain 47 / JCM 6285 / NBRC 100599) protein is Probable transaldolase.